The following is a 378-amino-acid chain: Pulmonary surfactant-associated protein D (378 aa).

A signal peptide spans 1 to 20; it reads MLLLPLSVLILLTQPPRSLG. Cysteine 35 and cysteine 40 each carry S-nitrosocysteine. Residues 43-221 are disordered; sequence MENGLPGRDG…ERGAKGESGL (179 aa). The 177-residue stretch at 46-222 folds into the Collagen-like domain; the sequence is GLPGRDGRDG…RGAKGESGLP (177 aa). The span at 50–65 shows a compositional bias: basic and acidic residues; the sequence is RDGRDGREGPRGEKGD. A 4-hydroxyproline modification is found at proline 78. The residue at position 87 (lysine 87) is a 5-hydroxylysine. Asparagine 90 is a glycosylation site (N-linked (GlcNAc...) asparagine). At proline 96 the chain carries 4-hydroxyproline. Position 99 is a 5-hydroxylysine (lysine 99). Residues 105–114 are compositionally biased toward pro residues; that stretch reads CGPPGPPGIP. The span at 137–146 shows a compositional bias: low complexity; the sequence is PKGETGPKGE. 4-hydroxyproline occurs at positions 171 and 177. Low complexity predominate over residues 173–197; that stretch reads ERGAPGSAGAAGPAGATGPQGPSGA. Positions 204 to 216 are enriched in basic and acidic residues; sequence KGDRGPPGERGAK. Residues 223–254 are a coiled coil; it reads GITALRQQVETLQGQVQRLQKAFSQYKKVELF. The C-type lectin domain maps to 260-378; the sequence is VGEKIFKTGG…GELRLVICEF (119 aa). Disulfide bonds link cysteine 281–cysteine 376 and cysteine 354–cysteine 368. The N-linked (GlcNAc...) asparagine glycan is linked to asparagine 323.

This sequence belongs to the SFTPD family. Oligomeric complex of 4 set of homotrimers. In terms of processing, hydroxylation on proline residues within the sequence motif, GXPG, is most likely to be 4-hydroxy as this fits the requirement for 4-hydroxylation in vertebrates. Post-translationally, S-nitrosylation at Cys-35 and Cys-40 alters the quaternary structure which results in a pro-inflammatory chemoattractive signaling activity with macrophages.

It localises to the secreted. It is found in the extracellular space. Its subcellular location is the extracellular matrix. The protein resides in the surface film. Its function is as follows. Contributes to the lung's defense against inhaled microorganisms, organic antigens and toxins. Interacts with compounds such as bacterial lipopolysaccharides, oligosaccharides and fatty acids and modulates leukocyte action in immune response. May participate in the extracellular reorganization or turnover of pulmonary surfactant. Binds strongly maltose residues and to a lesser extent other alpha-glucosyl moieties. The protein is Pulmonary surfactant-associated protein D (SFTPD) of Sus scrofa (Pig).